Here is a 252-residue protein sequence, read N- to C-terminus: tRNA1(Val) (adenine(37)-N6)-methyltransferase (252 aa).

Belongs to the methyltransferase superfamily. tRNA (adenine-N(6)-)-methyltransferase family.

It is found in the cytoplasm. The enzyme catalyses adenosine(37) in tRNA1(Val) + S-adenosyl-L-methionine = N(6)-methyladenosine(37) in tRNA1(Val) + S-adenosyl-L-homocysteine + H(+). In terms of biological role, specifically methylates the adenine in position 37 of tRNA(1)(Val) (anticodon cmo5UAC). The protein is tRNA1(Val) (adenine(37)-N6)-methyltransferase of Proteus mirabilis (strain HI4320).